Reading from the N-terminus, the 367-residue chain is Peptide chain release factor 2 (367 aa).

Q249 carries the N5-methylglutamine modification.

It belongs to the prokaryotic/mitochondrial release factor family. Post-translationally, methylated by PrmC. Methylation increases the termination efficiency of RF2.

It is found in the cytoplasm. In terms of biological role, peptide chain release factor 2 directs the termination of translation in response to the peptide chain termination codons UGA and UAA. The chain is Peptide chain release factor 2 from Pseudothermotoga lettingae (strain ATCC BAA-301 / DSM 14385 / NBRC 107922 / TMO) (Thermotoga lettingae).